Here is a 363-residue protein sequence, read N- to C-terminus: Uptake hydrogenase small subunit (363 aa).

A signal peptide (tat-type signal) is located at residues 1-46 (MGAATETFYSVIRRQGITRRSFHKFCSLTATSLGLGPLAASRIANA). The [4Fe-4S] cluster site is built by Cys63, Cys66, Cys161, Cys195, His233, Cys236, Cys261, and Cys267. [3Fe-4S] cluster is bound by residues Cys276, Cys295, and Cys298.

Belongs to the [NiFe]/[NiFeSe] hydrogenase small subunit family. In terms of assembly, heterodimer of a large and a small subunit. [4Fe-4S] cluster serves as cofactor. [3Fe-4S] cluster is required as a cofactor. Post-translationally, predicted to be exported by the Tat system. The position of the signal peptide cleavage has not been experimentally proven.

It is found in the cell membrane. It catalyses the reaction H2 + A = AH2. Functionally, this enzyme recycles the H(2) produced by nitrogenase to increase the production of ATP and to protect nitrogenase against inhibition or damage by O(2) under carbon- or phosphate-limited conditions. In Bradyrhizobium diazoefficiens (strain JCM 10833 / BCRC 13528 / IAM 13628 / NBRC 14792 / USDA 110), this protein is Uptake hydrogenase small subunit (hupA).